The sequence spans 356 residues: Non-functional pseudokinase ZRK15 (356 aa).

The Protein kinase domain maps to 62-356 (NRVSELFDEI…SSSSCGETSL (295 aa)). ATP-binding positions include 68-76 (FDEIPYDWY) and lysine 94.

It belongs to the protein kinase superfamily. Ser/Thr protein kinase family. ZRK subfamily. As to quaternary structure, interacts with RPP13L4/ZAR1.

The chain is Non-functional pseudokinase ZRK15 from Arabidopsis thaliana (Mouse-ear cress).